The sequence spans 310 residues: Homoserine kinase (310 aa).

91 to 101 (PIGSGLGSSAC) serves as a coordination point for ATP.

Belongs to the GHMP kinase family. Homoserine kinase subfamily.

Its subcellular location is the cytoplasm. It catalyses the reaction L-homoserine + ATP = O-phospho-L-homoserine + ADP + H(+). The protein operates within amino-acid biosynthesis; L-threonine biosynthesis; L-threonine from L-aspartate: step 4/5. Its function is as follows. Catalyzes the ATP-dependent phosphorylation of L-homoserine to L-homoserine phosphate. This chain is Homoserine kinase, found in Shigella sonnei (strain Ss046).